The chain runs to 82 residues: MSFNPELATKTLEAEGLRCPEPVMMVRKTIRNMQDGEVLLVKADDPSTTRDIPSFCRFMDHQLIAAQTEQLPYQYLIKKGLE.

Cys-19 (cysteine persulfide intermediate) is an active-site residue.

Belongs to the sulfur carrier protein TusA family.

The protein resides in the cytoplasm. In terms of biological role, sulfur carrier protein which probably makes part of a sulfur-relay system. This Vibrio parahaemolyticus serotype O3:K6 (strain RIMD 2210633) protein is Sulfur carrier protein TusA.